Reading from the N-terminus, the 473-residue chain is Vasculin (473 aa).

Disordered regions lie at residues 1-25 (MAQH…SSLN), 44-170 (RRRH…SRTP), and 186-341 (SGFP…HQER). Residue Ser49 is modified to Phosphoserine. An Omega-N-methylarginine modification is found at Arg87. Polar residues predominate over residues 94–117 (NSRSRSSIFHSGKSQGLHENSIPD). Positions 119 to 133 (ETGRKEDKRERRQFE) are enriched in basic and acidic residues. Polar residues-rich tracts occupy residues 193-204 (NLQSQPVKNGTG) and 248-286 (NFNT…QQPR). Phosphoserine occurs at positions 274, 276, 322, and 381. Positions 293-329 (MRSDKKSEFLKALKRDRVEEEHEDESHAGSEKDDDSF) are enriched in basic and acidic residues. The interval 450–473 (TFKPTIENDDTETSSSDTSDDDDV) is disordered. The span at 456–473 (ENDDTETSSSDTSDDDDV) shows a compositional bias: acidic residues.

It belongs to the vasculin family. In terms of assembly, interacts with GTF2B, GTF2F2, RNA polymerase II and TBP. As to expression, ubiquitously expressed (at protein level).

The protein resides in the nucleus. Functions as a GC-rich promoter-specific transactivating transcription factor. This is Vasculin (Gpbp1) from Mus musculus (Mouse).